Consider the following 670-residue polypeptide: Probable leucine-rich repeat receptor-like protein kinase At1g68400 (670 aa).

Residues 1-29 (MAKSSFFNKHLLLSLLILLQSCLLSSSSS) form the signal peptide. Residues 30–274 (TDSETLLNFK…KSNNTSRIST (245 aa)) are Extracellular-facing. N-linked (GlcNAc...) asparagine glycosylation is found at N52, N79, N102, N109, and N112. LRR repeat units lie at residues 69 to 91 (RVTR…TSLT), 92 to 114 (SLRV…SNLT), 115 to 137 (ALKL…ITSL), 139 to 162 (RLYR…TDLT), 163 to 185 (HLLT…NLSD), and 186 to 207 (LQDF…LSQF). Residues N149, N182, and N190 are each glycosylated (N-linked (GlcNAc...) asparagine). Residues 230–266 (SSDPTKPGRPDEAKASPLNKPETVPSSPTSIHGGDKS) form a disordered region. Residues 253–266 (VPSSPTSIHGGDKS) are compositionally biased toward polar residues. A glycan (N-linked (GlcNAc...) asparagine) is linked at N268. Residues 275 to 295 (ISLIAIILGDFIILSFVSLLL) traverse the membrane as a helical segment. Residues 296 to 670 (YYCFWRQYAV…EDTCGGTTSQ (375 aa)) lie on the Cytoplasmic side of the membrane. Residues 362 to 636 (RASAEMLGKG…GHVVKLIEDI (275 aa)) enclose the Protein kinase domain. The residue at position 364 (S364) is a Phosphoserine. ATP contacts are provided by residues 368-376 (LGKGGFGTA) and K390. S443 carries the post-translational modification Phosphoserine. T463 is modified (phosphothreonine). Catalysis depends on D491, which acts as the Proton acceptor. T616 carries the phosphothreonine modification.

This sequence belongs to the protein kinase superfamily. Ser/Thr protein kinase family.

It localises to the cell membrane. It carries out the reaction L-seryl-[protein] + ATP = O-phospho-L-seryl-[protein] + ADP + H(+). The enzyme catalyses L-threonyl-[protein] + ATP = O-phospho-L-threonyl-[protein] + ADP + H(+). The chain is Probable leucine-rich repeat receptor-like protein kinase At1g68400 from Arabidopsis thaliana (Mouse-ear cress).